A 299-amino-acid chain; its full sequence is Acetylglutamate kinase (299 aa).

Substrate-binding positions include G68–G69, R90, and N194.

Belongs to the acetylglutamate kinase family. ArgB subfamily.

The protein resides in the cytoplasm. It carries out the reaction N-acetyl-L-glutamate + ATP = N-acetyl-L-glutamyl 5-phosphate + ADP. The protein operates within amino-acid biosynthesis; L-arginine biosynthesis; N(2)-acetyl-L-ornithine from L-glutamate: step 2/4. Its function is as follows. Catalyzes the ATP-dependent phosphorylation of N-acetyl-L-glutamate. This Psychrobacter cryohalolentis (strain ATCC BAA-1226 / DSM 17306 / VKM B-2378 / K5) protein is Acetylglutamate kinase.